A 240-amino-acid chain; its full sequence is UDP-2,3-diacylglucosamine hydrolase (240 aa).

5 residues coordinate Mn(2+): Asp8, His10, Asp41, Asn79, and His114. 79–80 (NR) contributes to the substrate binding site. The substrate site is built by Asp122, Ser160, Asn164, Lys167, and His195. Residues His195 and His197 each contribute to the Mn(2+) site.

Belongs to the LpxH family. Mn(2+) is required as a cofactor.

It is found in the cell inner membrane. It catalyses the reaction UDP-2-N,3-O-bis[(3R)-3-hydroxytetradecanoyl]-alpha-D-glucosamine + H2O = 2-N,3-O-bis[(3R)-3-hydroxytetradecanoyl]-alpha-D-glucosaminyl 1-phosphate + UMP + 2 H(+). It participates in glycolipid biosynthesis; lipid IV(A) biosynthesis; lipid IV(A) from (3R)-3-hydroxytetradecanoyl-[acyl-carrier-protein] and UDP-N-acetyl-alpha-D-glucosamine: step 4/6. Its function is as follows. Hydrolyzes the pyrophosphate bond of UDP-2,3-diacylglucosamine to yield 2,3-diacylglucosamine 1-phosphate (lipid X) and UMP by catalyzing the attack of water at the alpha-P atom. Involved in the biosynthesis of lipid A, a phosphorylated glycolipid that anchors the lipopolysaccharide to the outer membrane of the cell. The polypeptide is UDP-2,3-diacylglucosamine hydrolase (Photorhabdus laumondii subsp. laumondii (strain DSM 15139 / CIP 105565 / TT01) (Photorhabdus luminescens subsp. laumondii)).